Consider the following 365-residue polypeptide: L-lactate oxidase (365 aa).

The region spanning Arg-6–Cys-365 is the FMN hydroxy acid dehydrogenase domain. Tyr-32 is a pyruvate binding site. Residues Pro-85–Ala-87, Ser-114, and Gln-135 contribute to the FMN site. Residue Tyr-137 participates in pyruvate binding. FMN-binding residues include Thr-163, Lys-237, and Ser-259. The pyruvate site is built by His-261 and Arg-264. Catalysis depends on His-261, which acts as the Proton acceptor. Residues Asp-292 to Arg-296 and Arg-316 contribute to the FMN site.

It belongs to the FMN-dependent alpha-hydroxy acid dehydrogenase family. As to quaternary structure, homotetramer. FMN is required as a cofactor.

It catalyses the reaction (S)-lactate + O2 = pyruvate + H2O2. The enzyme catalyses glycolate + O2 = glyoxylate + H2O2. Its function is as follows. Catalyzes the oxidation of (S)-lactate (L-lactate) to pyruvate, with a reduction of O2 to H2O2. To a lesser extent is also able to use glycolate as substrate. The protein is L-lactate oxidase of Alicycliphilus denitrificans (strain DSM 14773 / CIP 107495 / K601).